We begin with the raw amino-acid sequence, 1499 residues long: Condensin complex subunit 1 (1499 aa).

Disordered stretches follow at residues 1–43 (MPRK…DGLS) and 1421–1499 (ITKN…MLDD). Residues 1432–1446 (PTTMSGSSRTTSRAA) show a composition bias toward low complexity. Composition is skewed to acidic residues over residues 1458-1467 (SDEDDSDSDD) and 1486-1499 (ADDDSDSDEFMLDD).

The protein belongs to the CND1 (condensin subunit 1) family. Component of the condensin I complex, which contains the mix-1/SMC2 and smc-4/SMC4 heterodimer, and three non SMC subunits that probably regulate the complex: dpy-26, capg-1 and dpy-28. Within the complex, interacts with dpy-26 and smc-4. Component of the dosage compensation complex, which consist of the condensin I like components mix-1/SMC2 and dpy-27/SMC4, and the three non SMC subunits dpy-26, capg-1 and dpy-28. Within the complex, interacts with mix-1, dpy-27, dpy-26 and capg-1. Interacts with smcl-1. Post-translationally, sumoylated. Sumoylated in the context of the dosage compensation complex but not in the condensin I complex. Sumoylation is important for assembly of the dosage compensation complex and its robust binding to the X chromosome. As to expression, expressed in somatic and germline tissues (at protein level).

It is found in the nucleus. Its subcellular location is the chromosome. Functionally, required for both chromosome condensation and segregation during mitosis and meiosis and X-chromosome dosage compensation depending on its binding partners. Regulatory subunit of the condensin I complex, a complex required for conversion of interphase chromatin into mitotic-like condense chromosomes. The condensin I complex probably introduces positive supercoils into relaxed DNA in the presence of type I topoisomerases and converts nicked DNA into positive knotted forms in the presence of type II topoisomerases. The condensin I complex function is required for proper chromosome segregation in mitosis and meiosis. As a member of the condensin I complex, further controls the crossover number and distribution in meiosis by restricting double strand break formation, possibly by influencing higher-order chromosome structure. Plays a role in robust cytokinesis upon presence of chromatin obstructions. Also a member of the condensin I-like dosage compensation complex that associates specifically with hermaphrodite X chromosomes to reduce their gene transcription during interphase, possibly through chromatin reorganization. This Caenorhabditis elegans protein is Condensin complex subunit 1.